Here is a 326-residue protein sequence, read N- to C-terminus: Probable cell division protein WhiA (326 aa).

Residues 275-308 (SLEELGALADPPLTKDAIAGRIRRLLALADKRAR) constitute a DNA-binding region (H-T-H motif).

Belongs to the WhiA family.

Functionally, involved in cell division and chromosome segregation. In Salinispora arenicola (strain CNS-205), this protein is Probable cell division protein WhiA.